Reading from the N-terminus, the 153-residue chain is MTTEKKSLGIQEIMDLLPHRYPFLMVDKVENYEISDERKTLRAIKNVSFNEPIFQGHFPAKPVFPGVLILEAMAQATGILAFTMVGKPSPNELYYFASIDNARFKRPVGPGDQLVLDVEFLKERRGIAKFTGVATVNGEVVCTAELMCAKREV.

His-57 is an active-site residue.

The protein belongs to the thioester dehydratase family. FabZ subfamily.

It localises to the cytoplasm. The enzyme catalyses a (3R)-hydroxyacyl-[ACP] = a (2E)-enoyl-[ACP] + H2O. Functionally, involved in unsaturated fatty acids biosynthesis. Catalyzes the dehydration of short chain beta-hydroxyacyl-ACPs and long chain saturated and unsaturated beta-hydroxyacyl-ACPs. In Aeromonas hydrophila subsp. hydrophila (strain ATCC 7966 / DSM 30187 / BCRC 13018 / CCUG 14551 / JCM 1027 / KCTC 2358 / NCIMB 9240 / NCTC 8049), this protein is 3-hydroxyacyl-[acyl-carrier-protein] dehydratase FabZ.